Reading from the N-terminus, the 1489-residue chain is Type-2 histone deacetylase 1 (1489 aa).

Composition is skewed to low complexity over residues 135–163, 190–259, 281–306, and 325–399; these read NNNNINNNNNSNGSNSSNNSHNGGSSPSG, SNGN…SRNL, NIINNNSNNNTNNNNNIMNGTTTSTT, and SPTS…NINN. Disordered stretches follow at residues 135 to 259, 281 to 556, 915 to 935, 955 to 1024, and 1151 to 1185; these read NNNN…SRNL, NIIN…NYQQ, NNNNNNNNNNNNNNNEEDDQL, NISK…RDRD, and STGINQFSTSTPITTTGTATVTPGSTTSSTNGEQC. Polar residues predominate over residues 400 to 430; it reads VANGTPRPSLQTSRLQGKLPSPQQYNTSPSH. Composition is skewed to low complexity over residues 431-450, 486-553, 915-928, and 959-988; these read QQYPSPKNNNNSNNIIPIQS, NNNN…NNSN, NNNNNNNNNNNNNN, and NNNNNNNNNNNNNNNNNNNNNNNNNNNNNN. Basic and acidic residues-rich tracts occupy residues 989–1001 and 1010–1024; these read RNRDRDREFERDN and IEKERNRNNRIRDRD. Residues 1158 to 1180 show a composition bias toward low complexity; it reads STSTPITTTGTATVTPGSTTSST. Histidine 1232 functions as the Proton acceptor in the catalytic mechanism. Residues 1325–1335 show a composition bias toward acidic residues; that stretch reads EQNDYDDDDNN. The disordered stretch occupies residues 1325–1374; sequence EQNDYDDDDNNNDVNNNNNNNNNNNNNNNNNNNNKNNNNNNSNSITQQST. The segment covering 1336–1367 has biased composition (low complexity); the sequence is NDVNNNNNNNNNNNNNNNNNNNNKNNNNNNSN.

It belongs to the histone deacetylase family. HD type 2 subfamily.

Its subcellular location is the nucleus. The protein localises to the cytoplasm. The enzyme catalyses N(6)-acetyl-L-lysyl-[histone] + H2O = L-lysyl-[histone] + acetate. Functionally, responsible for the deacetylation of lysine residues on the N-terminal part of the core histones (H2A, H2B, H3 and H4). Histone deacetylation plays an important role in transcriptional regulation, cell cycle progression and developmental events. Histone deacetylases act via the formation of large multiprotein complexes. This Dictyostelium discoideum (Social amoeba) protein is Type-2 histone deacetylase 1 (hdaD).